Here is a 400-residue protein sequence, read N- to C-terminus: Subtilisin-like protease 7 (400 aa).

Positions 1–20 (MGFITKAIPLALAAMSVVNG) are cleaved as a signal peptide. Residues 21–119 (AEILETRAGV…IERDARVQIN (99 aa)) constitute a propeptide that is removed on maturation. One can recognise an Inhibitor I9 domain in the interval 36–118 (KYIVIMNDGV…YIERDARVQI (83 aa)). The Peptidase S8 domain maps to 129-400 (SWGLARVGSR…GKLINNGSGK (272 aa)). Active-site charge relay system residues include Asp161 and His192. Asn222 and Asn252 each carry an N-linked (GlcNAc...) asparagine glycan. The active-site Charge relay system is the Ser346. Asn396 is a glycosylation site (N-linked (GlcNAc...) asparagine).

Belongs to the peptidase S8 family.

Its subcellular location is the secreted. In terms of biological role, secreted subtilisin-like serine protease with keratinolytic activity that contributes to pathogenicity. The chain is Subtilisin-like protease 7 (SUB7) from Arthroderma otae (strain ATCC MYA-4605 / CBS 113480) (Microsporum canis).